We begin with the raw amino-acid sequence, 860 residues long: Leucine--tRNA ligase (860 aa).

Residues 42–52 (PYPSGRLHMGH) carry the 'HIGH' region motif. The 'KMSKS' region signature appears at 619 to 623 (KMSKS). Residue Lys622 coordinates ATP.

It belongs to the class-I aminoacyl-tRNA synthetase family.

It is found in the cytoplasm. It carries out the reaction tRNA(Leu) + L-leucine + ATP = L-leucyl-tRNA(Leu) + AMP + diphosphate. The polypeptide is Leucine--tRNA ligase (Yersinia pseudotuberculosis serotype O:3 (strain YPIII)).